Reading from the N-terminus, the 408-residue chain is Snake venom metalloproteinase BaP1 (408 aa).

The first 20 residues, 1–20 (MIEVLLVTICLAVFPYQGSS), serve as a signal peptide directing secretion. A propeptide spanning residues 21-191 (IILESGNVND…KASQSNLTPE (171 aa)) is cleaved from the precursor. Gln-192 carries the pyrrolidone carboxylic acid modification. Residues 198–394 (RYIELAVVAD…HNPQCILNKP (197 aa)) form the Peptidase M12B domain. 3 disulfide bridges follow: Cys-309–Cys-389, Cys-349–Cys-373, and Cys-351–Cys-356. Residue His-334 participates in Zn(2+) binding. The active site involves Glu-335. Zn(2+) is bound by residues His-338 and His-344. The propeptide occupies 395-408 (LLTVSGNELLEAGE).

This sequence belongs to the venom metalloproteinase (M12B) family. P-I subfamily. As to quaternary structure, monomer. Zn(2+) serves as cofactor. In terms of tissue distribution, expressed by the venom gland.

The protein resides in the secreted. Its activity is regulated as follows. Inhibited by EDTA, partially inhibited by o-phenantropine, and not inhibited by PMSF, pepstatin A, and aprotinin. Zinc metalloprotease that exhibits a weak hemorrhagic activity (with a minimum hemorrhagic dose of 20 ug by intradermal and intramuscular injection into mice). The basal membrane components collagen (all chains of type IV) (COL4A4), laminin and nidogen are all degraded by this toxin. Rapidly degrades the Aalpha-chain (FGA) of fibrinogen, and later on, degrades the Bbeta-chain (FGB) of fibrinogen. Also activates the complement system, and induces rat neutrophil chemotaxis. Induces edema in mouse food pad and shows a mild myotoxicity. The sequence is that of Snake venom metalloproteinase BaP1 from Bothrops asper (Terciopelo).